We begin with the raw amino-acid sequence, 474 residues long: Glycogen synthase (474 aa).

K15 lines the ADP-alpha-D-glucose pocket.

This sequence belongs to the glycosyltransferase 1 family. Bacterial/plant glycogen synthase subfamily.

The catalysed reaction is [(1-&gt;4)-alpha-D-glucosyl](n) + ADP-alpha-D-glucose = [(1-&gt;4)-alpha-D-glucosyl](n+1) + ADP + H(+). Its pathway is glycan biosynthesis; glycogen biosynthesis. In terms of biological role, synthesizes alpha-1,4-glucan chains using ADP-glucose. The protein is Glycogen synthase of Chlamydia muridarum (strain MoPn / Nigg).